The chain runs to 273 residues: Putative pyruvate, phosphate dikinase regulatory protein (273 aa).

153–160 (GVSRTSKS) is an ADP binding site.

The protein belongs to the pyruvate, phosphate/water dikinase regulatory protein family. PDRP subfamily.

The catalysed reaction is N(tele)-phospho-L-histidyl/L-threonyl-[pyruvate, phosphate dikinase] + ADP = N(tele)-phospho-L-histidyl/O-phospho-L-threonyl-[pyruvate, phosphate dikinase] + AMP + H(+). It carries out the reaction N(tele)-phospho-L-histidyl/O-phospho-L-threonyl-[pyruvate, phosphate dikinase] + phosphate + H(+) = N(tele)-phospho-L-histidyl/L-threonyl-[pyruvate, phosphate dikinase] + diphosphate. In terms of biological role, bifunctional serine/threonine kinase and phosphorylase involved in the regulation of the pyruvate, phosphate dikinase (PPDK) by catalyzing its phosphorylation/dephosphorylation. The chain is Putative pyruvate, phosphate dikinase regulatory protein from Ehrlichia canis (strain Jake).